The chain runs to 314 residues: D-alanine--D-alanine ligase (314 aa).

Residues 112-307 (KQVWQSLGLP…FQQLVLSILD (196 aa)) enclose the ATP-grasp domain. 138-193 (AQMLGFPLIVKPAHEGSSIGMAKVGDVAELIAAWRAASAYDAQVLVEQWIQGPEFT) lines the ATP pocket. Residues Asp261, Glu274, and Asn276 each coordinate Mg(2+).

Belongs to the D-alanine--D-alanine ligase family. It depends on Mg(2+) as a cofactor. The cofactor is Mn(2+).

Its subcellular location is the cytoplasm. The enzyme catalyses 2 D-alanine + ATP = D-alanyl-D-alanine + ADP + phosphate + H(+). Its pathway is cell wall biogenesis; peptidoglycan biosynthesis. Its function is as follows. Cell wall formation. The chain is D-alanine--D-alanine ligase from Stutzerimonas stutzeri (strain A1501) (Pseudomonas stutzeri).